Consider the following 948-residue polypeptide: MSSLEDIKNETVDLEKIPIEEVFQQLKCSREGLTTQEGEDRIQIFGPNKLEEKKESKLLKFLGFMWNPLSWVMEMAAIMAIALANGDGRPPDWQDFVGIICLLVINSTISFIEENNAGNAAAALMAGLAPKTKVLRDGKWSEQEAAILVPGDIVSIKLGDIIPADARLLEGDPLKVDQSALTGESLPVTKHPGQEVFSGSTCKQGEIEAVVIATGVHTFFGKAAHLVDSTNQVGHFQKVLTAIGNFCICSIAIGMVIEIIVMYPIQRRKYRDGIDNLLVLLIGGIPIAMPTVLSVTMAIGSHRLSQQGAITKRMTAIEEMAGMDVLCSDKTGTLTLNKLSVDKNLVEVFCKGVEKDQVLLFAAMASRVENQDAIDAAMVGMLADPKEARAGIREVHFLPFNPVDKRTALTYIDGSGNWHRVSKGAPEQILELAKASNDLSKKVLSIIDKYAERGLRSLAVARQVVPEKTKESPGAPWEFVGLLPLFDPPRHDSAETIRRALNLGVNVKMITGDQLAIGKETGRRLGMGTNMYPSSALLGTHKDANLASIPVEELIEKADGFAGVFPEHKYEIVKKLQERKHIVGMTGDGVNDAPALKKADIGIAVADATDAARGASDIVLTEPGLSVIISAVLTSRAIFQRMKNYTIYAVSITIRIVFGFMLIALIWEFDFSAFMVLIIAILNDGTIMTISKDRVKPSPTPDSWKLKEIFATGVVLGGYQAIMTVIFFWAAHKTDFFSDTFGVRSIRDNNHELMGAVYLQVSIISQALIFVTRSRSWSFVERPGALLMIAFLIAQLIATLIAVYANWEFAKIRGIGWGWAGVIWLYSIVTYFPLDVFKFAIRYILSGKAWLNLFENKTAFTMKKDYGKEEREAQWALAQRTLHGLQPKEAVNIFPEKGSYRELSEIAEQAKRRAEIARLRELHTLKGHVESVVKLKGLDIETPSHYTV.

Serine 2 is modified (N-acetylserine). Residues 2–61 (SSLEDIKNETVDLEKIPIEEVFQQLKCSREGLTTQEGEDRIQIFGPNKLEEKKESKLLKF) are Cytoplasmic-facing. A helical transmembrane segment spans residues 62-81 (LGFMWNPLSWVMEMAAIMAI). Topologically, residues 82–93 (ALANGDGRPPDW) are extracellular. Residues 94-114 (QDFVGIICLLVINSTISFIEE) form a helical membrane-spanning segment. Residues 115–243 (NNAGNAAAAL…GHFQKVLTAI (129 aa)) lie on the Cytoplasmic side of the membrane. A helical transmembrane segment spans residues 244–264 (GNFCICSIAIGMVIEIIVMYP). Residues 265–273 (IQRRKYRDG) lie on the Extracellular side of the membrane. The chain crosses the membrane as a helical span at residues 274–291 (IDNLLVLLIGGIPIAMPT). The Cytoplasmic segment spans residues 292 to 643 (VLSVTMAIGS…TSRAIFQRMK (352 aa)). Aspartate 329 acts as the 4-aspartylphosphate intermediate in catalysis. Mg(2+) contacts are provided by aspartate 588 and aspartate 592. The chain crosses the membrane as a helical span at residues 644–665 (NYTIYAVSITIRIVFGFMLIAL). At 666 to 670 (IWEFD) the chain is on the extracellular side. Residues 671 to 693 (FSAFMVLIIAILNDGTIMTISKD) form a helical membrane-spanning segment. The Cytoplasmic portion of the chain corresponds to 694–709 (RVKPSPTPDSWKLKEI). Residues 710 to 730 (FATGVVLGGYQAIMTVIFFWA) traverse the membrane as a helical segment. At 731-751 (AHKTDFFSDTFGVRSIRDNNH) the chain is on the extracellular side. The chain crosses the membrane as a helical span at residues 752-772 (ELMGAVYLQVSIISQALIFVT). The Cytoplasmic portion of the chain corresponds to 773 to 784 (RSRSWSFVERPG). A helical membrane pass occupies residues 785 to 805 (ALLMIAFLIAQLIATLIAVYA). Over 806–813 (NWEFAKIR) the chain is Extracellular. A helical transmembrane segment spans residues 814–834 (GIGWGWAGVIWLYSIVTYFPL). Topologically, residues 835-948 (DVFKFAIRYI…DIETPSHYTV (114 aa)) are cytoplasmic. A Phosphothreonine modification is found at threonine 881. Residue serine 899 is modified to Phosphoserine. A Phosphoserine; by CIPK11 modification is found at serine 931. The segment at 946 to 948 (YTV) is interaction with 14-3-3 proteins. Threonine 947 bears the Phosphothreonine mark.

The protein belongs to the cation transport ATPase (P-type) (TC 3.A.3) family. Type IIIA subfamily. Binds to 14-3-3 proteins. The binding is induced by phosphorylation of Thr-947 and it activates the H(+)-ATPase. Interacts (via the R-domain) with PSY1R (via C-terminus). Part of a functional complex containing PSKR1, BAK1, CNGC17, and AHA. Interacts with CNGC17 and PSKR1. Interacts with PP2C67/PP2C-D1 at the plasma membrane. Interacts with AHA1. Phosphorylated, probably by PHOT1 and PHOT2, at C-terminal Thr-947 in guard cells in response to blue light to induce stomatal opening. Post-translationally, phosphorylation at Thr-881 by PSY1R. This phosphorylation activates proton pumping. Decreased phosphorylation in response to flg22 elicitation. In terms of processing, phosphorylation at Ser-899 is specifically induced by RALF1, thus leading to the inhibition of proton transport. Increased phosphorylation in response to flg22 elicitation. Phosphorylation of Thr-947 induces the binding to 14-3-3 proteins, but phosphorylation of Ser-931 interferes with this binding no matter whether Thr-947 is phosphorylated or not. Decreased phosphorylation in response to flg22 elicitation. Phosphorylation of Thr-947 is enhanced by the presence of brassinolide (BL) via the BRI1-BIN2 pathway and prior the trigger of hypocotyl elongation. Inactivated by PP2C67/PP2C-D1-mediated Thr-947 dephosphorylation; SAUR19 inhibits the action of PP2C67/PP2C-D1 and thus promotes the active phosphorylated form. Post-translationally, abscisic acid induces dephosphorylation of AHA2 in etiolated seedlings, suppressing ATP hydrolysis and hypocotyl elongation. As to expression, higher levels in roots than in shoots. Expressed in epidermal and root cortex cells, in phloem, xylem and root hairs. Detected in cotyledons, leaves, hypocotyls, roots and root hairs. Expressed in guard cells and mesophyll cells.

The protein localises to the cell membrane. It carries out the reaction ATP + H2O + H(+)(in) = ADP + phosphate + 2 H(+)(out). Regulated by an auto-inhibitory C-terminal domain that can be displaced by phosphorylation of Thr-947 and the subsequent binding of 14-3-3 proteins. Negatively regulated by PKS5. PKS5 phosphorylates Ser-931, inhibiting interaction with the activating 14-3-3 protein. Positively regulated by PSY1R. PSY1R phosphorylates Thr-881, situated in the auto-inhibitory region I of the C-terminal domain, causing pump activation. Negatively regulated by the secreted peptide RALF. After specific binding to FERONIA, RALF causes phosphorylation at Ser-899, mediating the inhibition of proton transport. Activated by lysophospholipids, without the involvement of phosphorylation of Thr-947. This activation is critically dependent on the single autoinhibitory residue Leu-919. Repressed by PP2C-D phosphatases (e.g. PP2C67/PP2C-D1 and PP2C64/PP2C-D5) which dephosphorylates Thr-947. Triggered by SAUR19 via phosphorylation of the C-terminal autoinhibitory domain (e.g. Thr-947), as a result of the inhibition of PP2C67/PP2C-D1. Phosphorylation on Thr residues is repressed by tyrphostin 9, sphingosine, GW5074 and BML-265. By contrast, the fungal phytotoxin fusicoccin (FC) promotes phosphorylation of Thr-947 independently to BHP, thus leading to large stomatal opening. In terms of biological role, the plasma membrane H(+) ATPase of plants and fungi generates a proton gradient that drives the active transport of nutrients by H(+)-symport. The resulting external acidification and/or internal alkinization may mediate growth responses. Involved in maintaining the membrane potential and delta-pH, together forming the plasma membrane protonmotive force (PMF) required for root and hypocotyl elongation and root tropism. Important for root growth and development during different nitrogen regimes. Forms a functional cation-translocating unit with CNGC17 that is activated by PSKR1/BAK1 and possibly other BAK1/RLK complexes. Promotes stomatal opening in response to blue light. The chain is ATPase 2, plasma membrane-type from Arabidopsis thaliana (Mouse-ear cress).